We begin with the raw amino-acid sequence, 199 residues long: V-type ATP synthase subunit E (199 aa).

This sequence belongs to the V-ATPase E subunit family.

Its function is as follows. Produces ATP from ADP in the presence of a proton gradient across the membrane. The polypeptide is V-type ATP synthase subunit E (Borrelia garinii subsp. bavariensis (strain ATCC BAA-2496 / DSM 23469 / PBi) (Borreliella bavariensis)).